The following is a 922-amino-acid chain: MVYTISGIRFPVLPSLHKSTLRCDRRASSHSFFLKNNSSSFSRTSLYAKFSRDSETKSSTIAESDKVLIPEDQDNSVSLADQLENPDITSEDAQNLEDLTMKDGNKYNIDESTSSYREVGDEKGSVTSSSLVDVNTDTQAKKTSVHSDKKVKVDKPKIIPPPGTGQKIYEIDPLLQAHRQHLDFRYGQYKRIREEIDKYEGGLDAFSRGYEKFGFTRSATGITYREWAPGAKSAALVGDFNNWNPNADVMTKDAFGVWEIFLPNNADGSPPIPHGSRVKIHMDTPSGIKDSIPAWIKFSVQAPGEIPYNGIYYDPPEEEKYVFKHPQPKRPQSIRIYESHIGMSSPEPKINTYANFRDDVLPRIKKLGYNAVQIMAIQEHSYYASFGYHVTNFFAPSSRFGTPEDLKSLIDRAHELGLLVLMDIVHSHSSNNTLDGLNMFDGTDGHYFHPGSRGYHWMWDSRLFNYGSWEVLRYLLSNARWWLDEYKFDGFRFDGVTSMMYTHHGLQVSFTGNYSEYFGLATDVEAVVYMMLVNDLIHGLFPEAVSIGEDVSGMPTFCLPTQDGGIGFNYRLHMAVADKWIELLKKQDEDWRMGDIVHTLTNRRWLEKCVVYAESHDQALVGDKTLAFWLMDKDMYDFMALDRPSTPLIDRGIALHKMIRLITMGLGGEGYLNFMGNEFGHPEWIDFPRGEQHLPNGKIVPGNNNSYDKCRRRFDLGDADYLRYHGMQEFDRAMQHLEERYGFMTSEHQYISRKNEGDRVIIFERDNLVFVFNFHWTNSYSDYKVGCLKPGKYKIVLDSDDTLFGGFNRLNHTAEYFTSEGWYDDRPRSFLVYAPSRTAVVYALADGVESEPIELSDGVESEPIELSVGVESEPIELSVEEAESEPIERSVEEVESETTQQSVEVESETTQQSVEVESETTQ.

The transit peptide at 1–47 directs the protein to the chloroplast; sequence MVYTISGIRFPVLPSLHKSTLRCDRRASSHSFFLKNNSSSFSRTSLY. Residues 83–130 are disordered; the sequence is LENPDITSEDAQNLEDLTMKDGNKYNIDESTSSYREVGDEKGSVTSSS. Residues 99-109 show a composition bias toward basic and acidic residues; the sequence is LTMKDGNKYNI. The active-site Nucleophile is the Asp494. Glu549 (proton donor) is an active-site residue. The segment at 870–922 is disordered; that stretch reads VESEPIELSVEEAESEPIERSVEEVESETTQQSVEVESETTQQSVEVESETTQ. The span at 897 to 922 shows a compositional bias: low complexity; that stretch reads ETTQQSVEVESETTQQSVEVESETTQ.

It belongs to the glycosyl hydrolase 13 family. GlgB subfamily. In terms of assembly, monomer. As to expression, expressed in roots, leaves, stipules, pods and flowers.

The protein resides in the plastid. It is found in the chloroplast. The protein localises to the amyloplast. The catalysed reaction is Transfers a segment of a (1-&gt;4)-alpha-D-glucan chain to a primary hydroxy group in a similar glucan chain.. It functions in the pathway glycan biosynthesis; starch biosynthesis. Its function is as follows. Catalyzes the formation of the alpha-1,6-glucosidic linkages in starch by scission of a 1,4-alpha-linked oligosaccharide from growing alpha-1,4-glucan chains and the subsequent attachment of the oligosaccharide to the alpha-1,6 position. May preferentially transfer short chains during branching. Responsible for the synthesis of about 75% of the amylopectin found in the starch granules of mature embryos. This Pisum sativum (Garden pea) protein is 1,4-alpha-glucan-branching enzyme 1, chloroplastic/amyloplastic (SBEI).